We begin with the raw amino-acid sequence, 210 residues long: Holliday junction resolvase RecU (210 aa).

Residues threonine 87, aspartate 89, glutamate 102, and glutamine 121 each contribute to the Mg(2+) site.

It belongs to the RecU family. It depends on Mg(2+) as a cofactor.

It localises to the cytoplasm. It carries out the reaction Endonucleolytic cleavage at a junction such as a reciprocal single-stranded crossover between two homologous DNA duplexes (Holliday junction).. In terms of biological role, endonuclease that resolves Holliday junction intermediates in genetic recombination. Cleaves mobile four-strand junctions by introducing symmetrical nicks in paired strands. Promotes annealing of linear ssDNA with homologous dsDNA. Required for DNA repair, homologous recombination and chromosome segregation. This Lactobacillus delbrueckii subsp. bulgaricus (strain ATCC 11842 / DSM 20081 / BCRC 10696 / JCM 1002 / NBRC 13953 / NCIMB 11778 / NCTC 12712 / WDCM 00102 / Lb 14) protein is Holliday junction resolvase RecU.